Here is a 375-residue protein sequence, read N- to C-terminus: Lipid-A-disaccharide synthase (375 aa).

It belongs to the LpxB family.

The enzyme catalyses a lipid X + a UDP-2-N,3-O-bis[(3R)-3-hydroxyacyl]-alpha-D-glucosamine = a lipid A disaccharide + UDP + H(+). The protein operates within bacterial outer membrane biogenesis; LPS lipid A biosynthesis. Its function is as follows. Condensation of UDP-2,3-diacylglucosamine and 2,3-diacylglucosamine-1-phosphate to form lipid A disaccharide, a precursor of lipid A, a phosphorylated glycolipid that anchors the lipopolysaccharide to the outer membrane of the cell. The protein is Lipid-A-disaccharide synthase of Pseudomonas putida (strain ATCC 47054 / DSM 6125 / CFBP 8728 / NCIMB 11950 / KT2440).